We begin with the raw amino-acid sequence, 127 residues long: Fluoride-specific ion channel FluC (127 aa).

A run of 4 helical transmembrane segments spans residues 4–24 (LLLA…LLSM), 35–55 (LGTL…FAWF), 71–91 (TGFC…VFLL), and 103–123 (VFVN…LFSA). Na(+) is bound by residues Gly75 and Thr78.

This sequence belongs to the fluoride channel Fluc/FEX (TC 1.A.43) family.

The protein localises to the cell inner membrane. It carries out the reaction fluoride(in) = fluoride(out). Its activity is regulated as follows. Na(+) is not transported, but it plays an essential structural role and its presence is essential for fluoride channel function. In terms of biological role, fluoride-specific ion channel. Important for reducing fluoride concentration in the cell, thus reducing its toxicity. This chain is Fluoride-specific ion channel FluC, found in Escherichia coli (strain ATCC 8739 / DSM 1576 / NBRC 3972 / NCIMB 8545 / WDCM 00012 / Crooks).